Reading from the N-terminus, the 191-residue chain is Potassium-transporting ATPase KdpC subunit (191 aa).

A helical membrane pass occupies residues 10 to 30; that stretch reads ITLVFCVFFSVFYILVLWLFA.

It belongs to the KdpC family. The system is composed of three essential subunits: KdpA, KdpB and KdpC.

It localises to the cell inner membrane. In terms of biological role, part of the high-affinity ATP-driven potassium transport (or Kdp) system, which catalyzes the hydrolysis of ATP coupled with the electrogenic transport of potassium into the cytoplasm. This subunit acts as a catalytic chaperone that increases the ATP-binding affinity of the ATP-hydrolyzing subunit KdpB by the formation of a transient KdpB/KdpC/ATP ternary complex. The sequence is that of Potassium-transporting ATPase KdpC subunit from Bacteroides fragilis (strain ATCC 25285 / DSM 2151 / CCUG 4856 / JCM 11019 / LMG 10263 / NCTC 9343 / Onslow / VPI 2553 / EN-2).